An 814-amino-acid polypeptide reads, in one-letter code: S-layer protein sap (814 aa).

Residues 1 to 29 (MAKTNSYKKVIAGTMTAAMVAGVVSPVAA) form the signal peptide. 3 SLH domains span residues 30–93 (AGKT…DAKP), 94–150 (SFAD…KVNG), and 152–214 (PATK…AAKV). The BIG2 domain maps to 403–479 (FTSKDFKQNN…TVKDSKGKEL (77 aa)).

Post-translationally, probably glycosylated.

It is found in the secreted. Its subcellular location is the cell wall. It localises to the S-layer. Its function is as follows. The S-layer is a paracrystalline mono-layered assembly of proteins which coat the surface of bacteria. This chain is S-layer protein sap (sap), found in Bacillus anthracis.